A 670-amino-acid polypeptide reads, in one-letter code: Transketolase, chromosomal (670 aa).

Residue H32 participates in substrate binding. Thiamine diphosphate-binding positions include H72 and 120–122 (GPL). Residue D161 coordinates Mg(2+). Thiamine diphosphate is bound by residues G162 and N191. 2 residues coordinate Mg(2+): N191 and I193. Residues H267, R364, and S391 each contribute to the substrate site. Position 267 (H267) interacts with thiamine diphosphate. Residue E417 is the Proton donor of the active site. A thiamine diphosphate-binding site is contributed by F443. Positions 467, 475, and 526 each coordinate substrate.

The protein belongs to the transketolase family. In terms of assembly, homodimer. Mg(2+) is required as a cofactor. It depends on Ca(2+) as a cofactor. Requires Mn(2+) as cofactor. Co(2+) serves as cofactor. The cofactor is thiamine diphosphate.

It catalyses the reaction D-sedoheptulose 7-phosphate + D-glyceraldehyde 3-phosphate = aldehydo-D-ribose 5-phosphate + D-xylulose 5-phosphate. The protein operates within carbohydrate biosynthesis; Calvin cycle. Its function is as follows. Catalyzes the transfer of a two-carbon ketol group from a ketose donor to an aldose acceptor, via a covalent intermediate with the cofactor thiamine pyrophosphate. The protein is Transketolase, chromosomal (cbbTC) of Cupriavidus necator (strain ATCC 17699 / DSM 428 / KCTC 22496 / NCIMB 10442 / H16 / Stanier 337) (Ralstonia eutropha).